We begin with the raw amino-acid sequence, 87 residues long: Protein L (87 aa).

This protein inhibits the multiplication of double-stranded DNA phages, such as P1 and lambda. This is Protein L (L) from Escherichia coli.